Here is a 57-residue protein sequence, read N- to C-terminus: Small ribosomal subunit protein eS27 (57 aa).

Zn(2+) contacts are provided by cysteine 10, cysteine 13, cysteine 29, and cysteine 32. The segment at 10 to 32 (CPDCENEQTVFGKASTEVACAVC) adopts a C4-type zinc-finger fold.

The protein belongs to the eukaryotic ribosomal protein eS27 family. As to quaternary structure, part of the 30S ribosomal subunit. It depends on Zn(2+) as a cofactor.

This Halobacterium salinarum (strain ATCC 29341 / DSM 671 / R1) protein is Small ribosomal subunit protein eS27.